The following is a 153-amino-acid chain: Transcriptional repressor NrdR (153 aa).

The segment at 3-34 is a zinc-finger region; that stretch reads CPYCGHPDTRVVDSRPSDEGMAIRRRRECPSC. Positions 49 to 136 constitute an ATP-cone domain; sequence LMVVKRDGRK…VYREFDSVER (88 aa).

This sequence belongs to the NrdR family. The cofactor is Zn(2+).

In terms of biological role, negatively regulates transcription of bacterial ribonucleotide reductase nrd genes and operons by binding to NrdR-boxes. The chain is Transcriptional repressor NrdR from Thermus thermophilus (strain ATCC BAA-163 / DSM 7039 / HB27).